Here is a 749-residue protein sequence, read N- to C-terminus: Triacylglycerol lipase 5 (749 aa).

Residues 54–59 (HAISYD) carry the HXXXXD acyltransferase motif motif. The 206-residue stretch at 183–388 (LVLSGGSTFG…DNDMPISRLS (206 aa)) folds into the PNPLA domain. The short motif at 214–218 (GSSAG) is the GXSXG element. Residue Ser216 is the Nucleophile of the active site. N-linked (GlcNAc...) asparagine glycans are attached at residues Asn270, Asn289, Asn297, Asn304, and Asn321. The active-site Proton acceptor is the Asp375. N-linked (GlcNAc...) asparagine glycans are attached at residues Asn474 and Asn589. The disordered stretch occupies residues 585–643 (IKSPNKTAAPGRFPLQPLPSPSSTFNKRKMDMLSPSPSPSTSPQRSKSSFTQQGTRQKA). The segment covering 623 to 633 (PSTSPQRSKSS) has biased composition (low complexity). The span at 634–643 (FTQQGTRQKA) shows a compositional bias: polar residues. Ser645 carries the phosphoserine modification. N-linked (GlcNAc...) asparagine glycans are attached at residues Asn680, Asn714, and Asn742.

The protein resides in the lipid droplet. It carries out the reaction a triacylglycerol + H2O = a diacylglycerol + a fatty acid + H(+). The enzyme catalyses 1-(9Z-octadecenoyl)-sn-glycero-3-phosphate + (9Z)-octadecenoyl-CoA = 1,2-di-(9Z-octadecenoyl)-sn-glycero-3-phosphate + CoA. It catalyses the reaction 1-(9Z-octadecenoyl)-sn-glycero-3-phosphate + hexadecanoyl-CoA = 1-hexadecanoyl-2-(9Z-octadecenoyl)-sn-glycero-3-phosphate + CoA. Its activity is regulated as follows. Loses its lipolytic activity in cells lacking nonpolar lipids, but retains its side activity as lysophospholipid acyltransferase. In terms of biological role, lipid particle-localized triacylglycerol (TAG) lipase. The lipid droplet/particle is a lipid storage compartment which serves as a depot of energy and building blocks for membrane lipid biosynthesis. Involved in the mobilization of the non-polar storage lipids triacylglycerols (TAGs) from lipid particles by hydrolysis of TAGs, releasing and supplying specific fatty acids to the appropriate metabolic pathways. Also catalyzes the acylation of lysophosphatidic acid (LPA). This is Triacylglycerol lipase 5 (TGL5) from Saccharomyces cerevisiae (strain ATCC 204508 / S288c) (Baker's yeast).